Consider the following 278-residue polypeptide: 4-hydroxy-tetrahydrodipicolinate reductase (278 aa).

Residues 13–18 (GAAGKM) and 111–113 (GTT) each bind NAD(+). Catalysis depends on histidine 167, which acts as the Proton donor/acceptor. A (S)-2,3,4,5-tetrahydrodipicolinate-binding site is contributed by histidine 168. The Proton donor role is filled by lysine 171. 177-178 (GT) contributes to the (S)-2,3,4,5-tetrahydrodipicolinate binding site.

It belongs to the DapB family.

The protein resides in the cytoplasm. It catalyses the reaction (S)-2,3,4,5-tetrahydrodipicolinate + NAD(+) + H2O = (2S,4S)-4-hydroxy-2,3,4,5-tetrahydrodipicolinate + NADH + H(+). The enzyme catalyses (S)-2,3,4,5-tetrahydrodipicolinate + NADP(+) + H2O = (2S,4S)-4-hydroxy-2,3,4,5-tetrahydrodipicolinate + NADPH + H(+). It participates in amino-acid biosynthesis; L-lysine biosynthesis via DAP pathway; (S)-tetrahydrodipicolinate from L-aspartate: step 4/4. Functionally, catalyzes the conversion of 4-hydroxy-tetrahydrodipicolinate (HTPA) to tetrahydrodipicolinate. The protein is 4-hydroxy-tetrahydrodipicolinate reductase of Trichormus variabilis (strain ATCC 29413 / PCC 7937) (Anabaena variabilis).